The primary structure comprises 162 residues: Transcription elongation factor GreA (162 aa).

The stretch at 48–76 (NSEYQSAKDEQAFVEGRVKQLQQMIQFAQ) forms a coiled coil. The tract at residues 111–132 (GSAESDPLSGKISNDSPMGKAL) is disordered.

It belongs to the GreA/GreB family.

Its function is as follows. Necessary for efficient RNA polymerase transcription elongation past template-encoded arresting sites. The arresting sites in DNA have the property of trapping a certain fraction of elongating RNA polymerases that pass through, resulting in locked ternary complexes. Cleavage of the nascent transcript by cleavage factors such as GreA or GreB allows the resumption of elongation from the new 3'terminus. GreA releases sequences of 2 to 3 nucleotides. This Oenococcus oeni (strain ATCC BAA-331 / PSU-1) protein is Transcription elongation factor GreA.